The chain runs to 53 residues: uncharacterized protein (53 aa).

This is an uncharacterized protein from Archaeoglobus fulgidus (strain ATCC 49558 / DSM 4304 / JCM 9628 / NBRC 100126 / VC-16).